Here is a 245-residue protein sequence, read N- to C-terminus: tRNA (guanine-N(1)-)-methyltransferase (245 aa).

S-adenosyl-L-methionine-binding positions include Gly111 and 130–135 (IGDYVL).

The protein belongs to the RNA methyltransferase TrmD family. As to quaternary structure, homodimer.

The protein localises to the cytoplasm. The catalysed reaction is guanosine(37) in tRNA + S-adenosyl-L-methionine = N(1)-methylguanosine(37) in tRNA + S-adenosyl-L-homocysteine + H(+). In terms of biological role, specifically methylates guanosine-37 in various tRNAs. This chain is tRNA (guanine-N(1)-)-methyltransferase, found in Dictyoglomus turgidum (strain DSM 6724 / Z-1310).